A 448-amino-acid chain; its full sequence is N-succinylarginine dihydrolase (448 aa).

Substrate is bound by residues 19-28, asparagine 110, and 137-138; these read GGLSYGNVAS and HR. The active site involves glutamate 174. Arginine 214 lines the substrate pocket. Histidine 250 is a catalytic residue. Residues aspartate 252 and asparagine 365 each coordinate substrate. Cysteine 371 (nucleophile) is an active-site residue.

Belongs to the succinylarginine dihydrolase family. In terms of assembly, homodimer.

The catalysed reaction is N(2)-succinyl-L-arginine + 2 H2O + 2 H(+) = N(2)-succinyl-L-ornithine + 2 NH4(+) + CO2. Its pathway is amino-acid degradation; L-arginine degradation via AST pathway; L-glutamate and succinate from L-arginine: step 2/5. Functionally, catalyzes the hydrolysis of N(2)-succinylarginine into N(2)-succinylornithine, ammonia and CO(2). This is N-succinylarginine dihydrolase from Pseudomonas fluorescens (strain ATCC BAA-477 / NRRL B-23932 / Pf-5).